The chain runs to 304 residues: UTP--glucose-1-phosphate uridylyltransferase 1 (304 aa).

It belongs to the UDPGP type 2 family.

It carries out the reaction alpha-D-glucose 1-phosphate + UTP + H(+) = UDP-alpha-D-glucose + diphosphate. It functions in the pathway carbohydrate metabolism; nucleotide-sugar metabolism. This chain is UTP--glucose-1-phosphate uridylyltransferase 1 (hasC1), found in Streptococcus pyogenes serotype M18 (strain MGAS8232).